Here is a 144-residue protein sequence, read N- to C-terminus: Transcription antitermination protein NusB (144 aa).

This sequence belongs to the NusB family.

In terms of biological role, involved in transcription antitermination. Required for transcription of ribosomal RNA (rRNA) genes. Binds specifically to the boxA antiterminator sequence of the ribosomal RNA (rrn) operons. This chain is Transcription antitermination protein NusB, found in Pelotomaculum thermopropionicum (strain DSM 13744 / JCM 10971 / SI).